We begin with the raw amino-acid sequence, 147 residues long: Echinoidin (147 aa).

The region spanning 1 to 143 (GCCPTFWTSF…STRHYLICKL (143 aa)) is the C-type lectin domain. Disulfide bonds link C3–C14, C31–C141, and C116–C132. S38 is a glycosylation site (O-linked (Hex) serine). Residues 39–41 (RGD) carry the Cell attachment site motif.

As to quaternary structure, homodimer; disulfide-linked. In terms of processing, the identity of the saccharide is not reported in PubMed:3571253, and it is unlikely to be N-acetylgalactosamine. The sugar attached to Ser-38 is represented simply as Hex. As to expression, coelemic fluid.

It is found in the secreted. Its function is as follows. Role in the defense system of the organism against microorganisms. This lectin is specific for Gal-GalNAc. The polypeptide is Echinoidin (Heliocidaris crassispina (Sea urchin)).